A 92-amino-acid polypeptide reads, in one-letter code: Large ribosomal subunit protein bL25 (92 aa).

Belongs to the bacterial ribosomal protein bL25 family. In terms of assembly, part of the 50S ribosomal subunit; part of the 5S rRNA/L5/L18/L25 subcomplex. Contacts the 5S rRNA. Binds to the 5S rRNA independently of L5 and L18.

Its function is as follows. This is one of the proteins that binds to the 5S RNA in the ribosome where it forms part of the central protuberance. The polypeptide is Large ribosomal subunit protein bL25 (Aliivibrio fischeri (strain MJ11) (Vibrio fischeri)).